Here is a 148-residue protein sequence, read N- to C-terminus: MTNDNPRTVIAQGTFDLLHPGHVHYLEEAAAMGDELYVIVARKSNVDHKKAPICSAAQRRDVVDALEVVDEAILGHEEDIFVPIERIDPDVIALGHDQHHDADAIEDELERRGIDCVVDRASGRESTREDEVLSTRLIIDRILERRDR.

ATP is bound by residues 14-15 (TF), 19-22 (HPGH), and Asp97.

The protein belongs to the archaeal FAD synthase family. In terms of assembly, homodimer. A divalent metal cation serves as cofactor.

It catalyses the reaction FMN + ATP + H(+) = FAD + diphosphate. Its pathway is cofactor biosynthesis; FAD biosynthesis; FAD from FMN: step 1/1. Its function is as follows. Catalyzes the transfer of the AMP portion of ATP to flavin mononucleotide (FMN) to produce flavin adenine dinucleotide (FAD) coenzyme. This chain is FAD synthase, found in Natrialba magadii (strain ATCC 43099 / DSM 3394 / CCM 3739 / CIP 104546 / IAM 13178 / JCM 8861 / NBRC 102185 / NCIMB 2190 / MS3) (Natronobacterium magadii).